The primary structure comprises 62 residues: Large ribosomal subunit protein uL30 (62 aa).

This sequence belongs to the universal ribosomal protein uL30 family. Part of the 50S ribosomal subunit.

The polypeptide is Large ribosomal subunit protein uL30 (Geobacillus thermodenitrificans (strain NG80-2)).